Here is a 1294-residue protein sequence, read N- to C-terminus: ATPase PglY (1294 aa).

A disordered region spans residues 1205 to 1263; that stretch reads TQAAATPPPAPAASQPTAGDLSLDTPTSDPRIPYTSQETPTSSGGAGTARTSGGRRTTA. A compositionally biased stretch (polar residues) spans 1228 to 1244; that stretch reads DTPTSDPRIPYTSQETP. Positions 1252–1263 are enriched in low complexity; the sequence is TARTSGGRRTTA.

In terms of biological role, BREX systems (bacteriophage exclusion) provide immunity against bacteriophage. Part of a type 2 BREX system. Previously called the phage growth limitation (Pgl) system, it confers protection against bacteriophage phiC31. The bacteria allows one cycle of phage infection, but subsequent cycles are impaired, protecting the original bacterial colony. The system undergoes high rates (10(-3) to 10(-4)) of phase reversion, i.e. loss and regain of phiC31 resistance. When the pglW-pglX-pglY-pglZ genes are transformed into a susceptible S.lividans (strain 1326) they confer resistance to infection by phage phiC31 and phiBT1; all 4 genes are necessary. Its function is as follows. Hydrolyzes ATP but not AMP, ADP, GMP, GDP or GTP; activity is inhibited by the non-hydrolyzable ATP analog 5-adenylyl beta,gamma-imidodiphosphate. In Streptomyces coelicolor (strain ATCC BAA-471 / A3(2) / M145), this protein is ATPase PglY.